We begin with the raw amino-acid sequence, 91 residues long: Small ribosomal subunit protein uS19m (91 aa).

The protein belongs to the universal ribosomal protein uS19 family. Component of the mitochondrial small ribosomal subunit (mt-SSU). Mature N.crassa 74S mitochondrial ribosomes consist of a small (37S) and a large (54S) subunit. The 37S small subunit contains a 16S ribosomal RNA (16S mt-rRNA) and 32 different proteins. The 54S large subunit contains a 23S rRNA (23S mt-rRNA) and 42 different proteins.

Its subcellular location is the mitochondrion. In terms of biological role, component of the mitochondrial ribosome (mitoribosome), a dedicated translation machinery responsible for the synthesis of mitochondrial genome-encoded proteins, including at least some of the essential transmembrane subunits of the mitochondrial respiratory chain. The mitoribosomes are attached to the mitochondrial inner membrane and translation products are cotranslationally integrated into the membrane. The chain is Small ribosomal subunit protein uS19m (rsm19) from Neurospora crassa (strain ATCC 24698 / 74-OR23-1A / CBS 708.71 / DSM 1257 / FGSC 987).